Reading from the N-terminus, the 501-residue chain is Lysine--tRNA ligase (501 aa).

Mg(2+) is bound by residues E412 and E419.

This sequence belongs to the class-II aminoacyl-tRNA synthetase family. As to quaternary structure, homodimer. Requires Mg(2+) as cofactor.

It is found in the cytoplasm. It catalyses the reaction tRNA(Lys) + L-lysine + ATP = L-lysyl-tRNA(Lys) + AMP + diphosphate. This Dechloromonas aromatica (strain RCB) protein is Lysine--tRNA ligase.